The sequence spans 235 residues: Motile sperm domain-containing protein 3 (235 aa).

Disordered stretches follow at residues 1–30 (MRRGAPQDQELVGPGAPGRGSRGAPPPSGP) and 143–170 (ELQGQSDPTPHPEPHSWTASSTAQPFPE). Residues 33 to 145 (PVLVFPPDLV…RAPAYPLELQ (113 aa)) enclose the MSP domain. 2 helical membrane passes run 180–200 (SFLLFLLMGTVSVAFLLLPLQ) and 213–233 (VSLGQKLVAAYVLGLLTMVFL).

The protein localises to the membrane. This Bos taurus (Bovine) protein is Motile sperm domain-containing protein 3 (MOSPD3).